Consider the following 372-residue polypeptide: Alanine dehydrogenase (372 aa).

Positions 15 and 75 each coordinate substrate. Residue His96 is the Proton donor/acceptor of the active site. Residues Ser134, Thr178–Ala179, Asp198, Ser220, Val239–Leu240, Ile266–Asp269, Arg279, and Val298–Met301 each bind NAD(+). The active-site Proton donor/acceptor is Asp269.

The protein belongs to the AlaDH/PNT family. Homohexamer.

Its subcellular location is the cytoplasm. It carries out the reaction L-alanine + NAD(+) + H2O = pyruvate + NH4(+) + NADH + H(+). Its pathway is amino-acid degradation; L-alanine degradation via dehydrogenase pathway; NH(3) and pyruvate from L-alanine: step 1/1. Catalyzes the reversible reductive amination of pyruvate to L-alanine. A key factor in the assimilation of L-alanine as an energy source via the tricarboxylic acid cycle during sporulation. The sequence is that of Alanine dehydrogenase (ald) from Geobacillus stearothermophilus (Bacillus stearothermophilus).